The chain runs to 215 residues: MTSRSTARPNGQPQASKICQFKLVLLGESAVGKSSLVLRFVKGQFHEYQESTIGAAFLTQSVCLDDTTVKFEIWDTAGQERYHSLAPMYYRGAQAAIVVYDITNQETFARAKTWVKELQRQASPSIVIALAGNKADLANKRMVEYEEAQAYADDNSLLFMETSAKTAMNVNDLFLAIAKKLPKSEPQNLGGAAGRSRGVDLHEQSQQNKSQCCSN.

Threonine 2 carries the N-acetylthreonine modification. GTP is bound by residues serine 29, alanine 30, glycine 32, lysine 33, serine 34, serine 35, histidine 46, glutamate 47, threonine 52, and glycine 78. Mg(2+) is bound at residue serine 34. 2 short sequence motifs (switch) span residues 44–56 (QFHE…IGAA) and 77–93 (AGQE…YRGA). Position 52 (threonine 52) interacts with Mg(2+). Residue serine 84 is modified to Phosphoserine; by LRRK2. GTP is bound by residues asparagine 133, lysine 134, aspartate 136, alanine 164, and lysine 165. A disordered region spans residues 186 to 215 (PQNLGGAAGRSRGVDLHEQSQQNKSQCCSN). Low complexity predominate over residues 204–215 (QSQQNKSQCCSN). S-geranylgeranyl cysteine attachment occurs at residues cysteine 212 and cysteine 213.

Belongs to the small GTPase superfamily. Rab family. Binds EEA1. Interacts with RIN2 and RIN3, which probably regulate its pathway, possibly by acting as GEFs. Interacts with GDI1, GDI2, CHML and CHM; phosphorylation at Ser-84 disrupts this interaction. Mg(2+) serves as cofactor. Phosphorylation of Ser-84 in the switch II region by LRRK2 prevents the association of RAB regulatory proteins, including CHM, CHML and RAB GDP dissociation inhibitors GDI1 and GDI2. Post-translationally, (Microbial infection) Glycosylated on arginine residues by S.typhimurium protein Ssek3.

Its subcellular location is the cell membrane. It localises to the early endosome membrane. It is found in the melanosome. The catalysed reaction is GTP + H2O = GDP + phosphate + H(+). With respect to regulation, regulated by guanine nucleotide exchange factors (GEFs) which promote the exchange of bound GDP for free GTP. Regulated by GTPase activating proteins (GAPs) which increase the GTP hydrolysis activity. Inhibited by GDP dissociation inhibitors (GDIs). In terms of biological role, the small GTPases Rab are key regulators of intracellular membrane trafficking, from the formation of transport vesicles to their fusion with membranes. Rabs cycle between an inactive GDP-bound form and an active GTP-bound form that is able to recruit to membranes different sets of downstream effectors directly responsible for vesicle formation, movement, tethering and fusion. This chain is Ras-related protein Rab-5B, found in Homo sapiens (Human).